Consider the following 378-residue polypeptide: Erythronate-4-phosphate dehydrogenase (378 aa).

Residues S45 and T66 each contribute to the substrate site. NAD(+) is bound by residues D146 and T175. Residue R208 is part of the active site. D232 contacts NAD(+). E237 is an active-site residue. H254 serves as the catalytic Proton donor. G257 is a binding site for NAD(+). Y258 is a binding site for substrate.

Belongs to the D-isomer specific 2-hydroxyacid dehydrogenase family. PdxB subfamily. As to quaternary structure, homodimer.

The protein resides in the cytoplasm. It catalyses the reaction 4-phospho-D-erythronate + NAD(+) = (R)-3-hydroxy-2-oxo-4-phosphooxybutanoate + NADH + H(+). Its pathway is cofactor biosynthesis; pyridoxine 5'-phosphate biosynthesis; pyridoxine 5'-phosphate from D-erythrose 4-phosphate: step 2/5. Catalyzes the oxidation of erythronate-4-phosphate to 3-hydroxy-2-oxo-4-phosphonooxybutanoate. This is Erythronate-4-phosphate dehydrogenase from Escherichia coli O81 (strain ED1a).